A 393-amino-acid polypeptide reads, in one-letter code: 5-amino-6-(D-ribitylamino)uracil--L-tyrosine 4-hydroxyphenyl transferase (393 aa).

In terms of domain architecture, Radical SAM core spans 71 to 318 (VTYVINRNIN…TAVSRIFLGN (248 aa)). [4Fe-4S] cluster contacts are provided by C85, C89, and C92.

The protein belongs to the radical SAM superfamily. CofH family. Consists of two subunits, CofG and CofH. Requires [4Fe-4S] cluster as cofactor.

The enzyme catalyses 5-amino-6-(D-ribitylamino)uracil + L-tyrosine + S-adenosyl-L-methionine = 5-amino-5-(4-hydroxybenzyl)-6-(D-ribitylimino)-5,6-dihydrouracil + 2-iminoacetate + 5'-deoxyadenosine + L-methionine + H(+). It participates in cofactor biosynthesis; coenzyme F0 biosynthesis. In terms of biological role, catalyzes the radical-mediated synthesis of 5-amino-5-(4-hydroxybenzyl)-6-(D-ribitylimino)-5,6-dihydrouracil from 5-amino-6-(D-ribitylamino)uracil and L-tyrosine. This is 5-amino-6-(D-ribitylamino)uracil--L-tyrosine 4-hydroxyphenyl transferase from Trichodesmium erythraeum (strain IMS101).